The primary structure comprises 270 residues: Diaminopimelate epimerase (270 aa).

The substrate site is built by asparagine 15, glutamine 49, and asparagine 66. The active-site Proton donor is the cysteine 75. Residues 76–77, asparagine 155, asparagine 187, and 204–205 contribute to the substrate site; these read GN and ER. Cysteine 213 serves as the catalytic Proton acceptor. 214-215 provides a ligand contact to substrate; that stretch reads GS.

This sequence belongs to the diaminopimelate epimerase family. In terms of assembly, homodimer.

The protein localises to the cytoplasm. It carries out the reaction (2S,6S)-2,6-diaminopimelate = meso-2,6-diaminopimelate. Its pathway is amino-acid biosynthesis; L-lysine biosynthesis via DAP pathway; DL-2,6-diaminopimelate from LL-2,6-diaminopimelate: step 1/1. In terms of biological role, catalyzes the stereoinversion of LL-2,6-diaminopimelate (L,L-DAP) to meso-diaminopimelate (meso-DAP), a precursor of L-lysine and an essential component of the bacterial peptidoglycan. This Rickettsia rickettsii (strain Iowa) protein is Diaminopimelate epimerase.